The chain runs to 402 residues: S-adenosylmethionine synthase (402 aa).

H15 is a binding site for ATP. D17 is a Mg(2+) binding site. E43 contacts K(+). L-methionine-binding residues include E56 and Q99. The flexible loop stretch occupies residues 99 to 109; sequence QSPDIAQGVDT. Residues 174–176, 247–248, D256, 262–263, A279, and K283 contribute to the ATP site; these read DGK, RF, and RK. An L-methionine-binding site is contributed by D256. Residue K287 coordinates L-methionine.

The protein belongs to the AdoMet synthase family. As to quaternary structure, homotetramer; dimer of dimers. The cofactor is Mg(2+). K(+) serves as cofactor.

The protein localises to the cytoplasm. It catalyses the reaction L-methionine + ATP + H2O = S-adenosyl-L-methionine + phosphate + diphosphate. Its pathway is amino-acid biosynthesis; S-adenosyl-L-methionine biosynthesis; S-adenosyl-L-methionine from L-methionine: step 1/1. Its function is as follows. Catalyzes the formation of S-adenosylmethionine (AdoMet) from methionine and ATP. The overall synthetic reaction is composed of two sequential steps, AdoMet formation and the subsequent tripolyphosphate hydrolysis which occurs prior to release of AdoMet from the enzyme. The chain is S-adenosylmethionine synthase from Streptomyces coelicolor (strain ATCC BAA-471 / A3(2) / M145).